A 123-amino-acid polypeptide reads, in one-letter code: Small ribosomal subunit protein uS17 (123 aa).

Belongs to the universal ribosomal protein uS17 family. As to quaternary structure, part of the 30S ribosomal subunit.

One of the primary rRNA binding proteins, it binds specifically to the 5'-end of 16S ribosomal RNA. The chain is Small ribosomal subunit protein uS17 from Pyrobaculum aerophilum (strain ATCC 51768 / DSM 7523 / JCM 9630 / CIP 104966 / NBRC 100827 / IM2).